Consider the following 348-residue polypeptide: Rhodopsin (348 aa).

At M1 the chain carries N-acetylmethionine. The Extracellular segment spans residues 1-36 (MNGTEGLNFYVPFSNKTGVVRSPFEYPQYYLAEPWQ). Residues N2 and N15 are each glycosylated (N-linked (GlcNAc...) asparagine). The chain crosses the membrane as a helical span at residues 37 to 61 (FSVLAAYMFLLIVLGFPINFLTLYV). The Cytoplasmic segment spans residues 62 to 73 (TVQHKKLRTPLN). A helical transmembrane segment spans residues 74–96 (YIPLNLAVANLFMVFGGFTTTLY). At 97–110 (TSLHAYFVFGPTGC) the chain is on the extracellular side. The cysteines at positions 110 and 187 are disulfide-linked. Residues 111-133 (NLEGFFATLGGEIALWSLVVLAI) traverse the membrane as a helical segment. The 'Ionic lock' involved in activated form stabilization motif lies at 134 to 136 (ERY). Topologically, residues 134-152 (ERYVVVCKPMSNFRFGENH) are cytoplasmic. Residues 153–173 (AIMGLALTWVMAMACAAPPLV) traverse the membrane as a helical segment. The Extracellular segment spans residues 174-202 (GWSRYIPEGMQCSCGIDYYTSRQEVNNES). E201 contacts Zn(2+). Residues 203–224 (FVIYMFVVHFTIPLVIIFFCYG) traverse the membrane as a helical segment. The Cytoplasmic portion of the chain corresponds to 225 to 252 (QLVFTVKEAAAQQQESATTQKAEKEVTR). A helical transmembrane segment spans residues 253 to 274 (MVIIMVVAFLICWVPYASVAFY). Topologically, residues 275–286 (IFTHQGSDFGPI) are extracellular. Q279 is a Zn(2+) binding site. The chain crosses the membrane as a helical span at residues 287-308 (FMTIPSFFAKSSSIYNPVIYIM). K296 carries the post-translational modification N6-(retinylidene)lysine. Topologically, residues 309-348 (MNKQLRNCMLTTLCCGRNPLGDDEASTTASKTETSQVAPA) are cytoplasmic. S-palmitoyl cysteine attachment occurs at residues C322 and C323. Positions 330–348 (DDEASTTASKTETSQVAPA) are interaction with SAG. S334 bears the Phosphoserine mark. 2 positions are modified to phosphothreonine: T335 and T336. At S338 the chain carries Phosphoserine. A phosphothreonine mark is found at T340 and T342. S343 carries the phosphoserine modification.

The protein belongs to the G-protein coupled receptor 1 family. Opsin subfamily. In terms of assembly, homodimer. May form a complex composed of RHO, GRK1 and RCVRN in a Ca(2+)-dependent manner; RCVRN prevents the interaction between GRK1 and RHO. Interacts with GRK1. Interacts (phosphorylated form) with SAG. Interacts with GNAT1. Interacts with GNAT3. SAG and G-proteins compete for a common binding site. Interacts with PRCD; the interaction promotes PRCD stability. Forms a complex with ASAP1 and ARF4. Forms a complex with ASAP1, RAB11A, Rabin8/RAB3IP, ARF4 and RAB11FIP3; the complex regulates Golgi-to-cilia rhodopsin/RHO transport in photoreceptors. In terms of processing, phosphorylated on some or all of the serine and threonine residues present in the C-terminal region. Contains one covalently linked retinal chromophore. Upon light absorption, the covalently bound 11-cis-retinal is converted to all-trans-retinal. After hydrolysis of the Schiff base and release of the covalently bound all-trans-retinal, active rhodopsin is regenerated by binding of a fresh molecule of 11-cis-retinal.

It localises to the membrane. The protein localises to the cell projection. It is found in the cilium. The protein resides in the photoreceptor outer segment. Photoreceptor required for image-forming vision at low light intensity. Required for photoreceptor cell viability after birth. Light-induced isomerization of 11-cis to all-trans retinal triggers a conformational change that activates signaling via G-proteins. Subsequent receptor phosphorylation mediates displacement of the bound G-protein alpha subunit by the arrestin SAG and terminates signaling. The polypeptide is Rhodopsin (RHO) (Globicephala melas (Long-finned pilot whale)).